The primary structure comprises 250 residues: Phosphoribosylaminoimidazole-succinocarboxamide synthase (250 aa).

The protein belongs to the SAICAR synthetase family.

It catalyses the reaction 5-amino-1-(5-phospho-D-ribosyl)imidazole-4-carboxylate + L-aspartate + ATP = (2S)-2-[5-amino-1-(5-phospho-beta-D-ribosyl)imidazole-4-carboxamido]succinate + ADP + phosphate + 2 H(+). Its pathway is purine metabolism; IMP biosynthesis via de novo pathway; 5-amino-1-(5-phospho-D-ribosyl)imidazole-4-carboxamide from 5-amino-1-(5-phospho-D-ribosyl)imidazole-4-carboxylate: step 1/2. In Synechococcus sp. (strain WH7803), this protein is Phosphoribosylaminoimidazole-succinocarboxamide synthase.